A 691-amino-acid chain; its full sequence is Homeobox protein NOBOX (691 aa).

The segment covering 94–103 (ELTRGQKAGE) has biased composition (basic and acidic residues). The segment at 94 to 233 (ELTRGQKAGE…NSARATHNPV (140 aa)) is disordered. Positions 216-228 (PTSSPGAPNSARA) are enriched in polar residues. Residues 272–363 (RKKTRTLYRS…NRRAKWRKME (92 aa)) constitute a DNA-binding region (homeobox). 3 disordered regions span residues 366–385 (NGKESKDNPAAPGPASSQCS), 394–437 (VPME…AQRV), and 635–691 (QALG…SHVP). Residues 395–405 (PMEPKPDPFPQ) show a composition bias toward pro residues. Polar residues predominate over residues 420–432 (TSDQTLAPTQPSE). Residues 679-691 (EEARGDDKNSHVP) show a composition bias toward basic and acidic residues.

Expressed in ovaries, testes and pancreas. Expressed within all stages of the adult female germline, from primordial follicles through to MII oocytes.

The protein resides in the nucleus. In terms of biological role, transcription factor which may play a role in oogenesis. Binds preferentially to the DNA sequences 5'-TAATTG-3', 5'-TAGTTG-3' and 5'-TAATTA-3'. This chain is Homeobox protein NOBOX (NOBOX), found in Homo sapiens (Human).